The chain runs to 175 residues: COMPASS component SDC1 (175 aa).

Positions 1-12 (MNESENSPQHNE) are enriched in polar residues. The segment at 1–45 (MNESENSPQHNEVTVPMVEDTSSNADIPMEQIQREDNKNYDKHDN) is disordered. The span at 32 to 45 (IQREDNKNYDKHDN) shows a compositional bias: basic and acidic residues. The DPY-30 stretch occupies residues 121–162 (QTRKYLNTNVTPHLLAGMRLIAVQQPEDPLRVLGEYLIEQSN).

The protein belongs to the dpy-30 family. As to quaternary structure, component of the Set1C/COMPASS complex which consists of SET1(2), BRE2(2), SPP1(2), SDC1(1), SHG1(1), SWD1(1), SWD2(1), and SWD3(1). Interacts directly with BRE2.

It is found in the nucleus. In terms of biological role, component of the Set1C/COMPASS complex that specifically mono-, di- and trimethylates histone H3 to form H3K4me1/2/3, which subsequently plays a role in telomere length maintenance and transcription elongation regulation. COMPASS recognizes ubiquitinated H2B on one face of the nucleosome which stimulates the methylation of H3 on the opposing face. This chain is COMPASS component SDC1, found in Saccharomyces cerevisiae (strain ATCC 204508 / S288c) (Baker's yeast).